The chain runs to 614 residues: Leucine aminopeptidase 2 (614 aa).

A peptide contacts are provided by residues 139–141 and 271–276; these read QCQ and PYGGME. Histidine 300 contacts Zn(2+). Residue glutamate 301 is the Proton acceptor of the active site. Zn(2+)-binding residues include histidine 304 and glutamate 323. The active-site Proton donor is tyrosine 385.

Belongs to the peptidase M1 family. It depends on Zn(2+) as a cofactor.

It is found in the cytoplasm. It localises to the nucleus. The catalysed reaction is an epoxide + H2O = an ethanediol. Functionally, aminopeptidase that preferentially cleaves di- and tripeptides. Also has low epoxide hydrolase activity (in vitro). Can hydrolyze the epoxide leukotriene LTA(4) but it forms preferentially 5,6-dihydroxy-7,9,11,14-eicosatetraenoic acid rather than the cytokine leukotriene B(4) as the product compared to the homologous mammalian enzyme (in vitro). This chain is Leucine aminopeptidase 2, found in Aspergillus fumigatus (strain ATCC MYA-4609 / CBS 101355 / FGSC A1100 / Af293) (Neosartorya fumigata).